The following is a 450-amino-acid chain: MREIVHIQAGQCGNQIGAKFWEVISDEHGIDPSGNYVGDSDLQLERISVYYNEASSHKYVPRAILVDLEPGTMDSVRSGAFGHLFRPDNFIFGQSGAGNNWAKGHYTEGAELVDSVLDVVRKECENCDCLQGFQLTHSLGGGTGSGMGTLLISKVREEYPDRIMNTFSVVPSPKVSDTVVEPYNATLSIHQLVENTDETYCIDNEALYDICFRTLKLATPTYGDLNHLVSATMSGVTTSLRFPGQLNADLRKLAVNMVPFPRLHFFMPGFAPLTARGSQQYRALTVPELTQQMFDAKNMMAACDPRHGRYLTVATVFRGRMSMKEVDEQMLAIQSKNSSYFVEWIPNNVKVAVCDIPPRGLKMSSTFIGNSTAIQELFKRISEQFTAMFRRKAFLHWYTGEGMDEMEFTEAESNMNDLVSEYQQYQDATAEEEGEMYEDDDEESEAQGPK.

The MREI motif motif lies at 1 to 4 (MREI). GTP-binding residues include Gln-11, Glu-69, Ser-138, Gly-142, Thr-143, and Gly-144. Glu-69 provides a ligand contact to Mg(2+). A Phosphoserine; by CDK1 modification is found at Ser-172. GTP-binding residues include Asn-204 and Asn-226. The interval 422–450 (YQQYQDATAEEEGEMYEDDDEESEAQGPK) is disordered. The segment covering 429–450 (TAEEEGEMYEDDDEESEAQGPK) has biased composition (acidic residues). 5-glutamyl polyglutamate is present on Glu-438. Phosphoserine is present on Ser-444.

This sequence belongs to the tubulin family. As to quaternary structure, heterodimer of alpha- and beta-tubulin. A typical microtubule is a hollow water-filled tube with an outer diameter of 25 nm and an inner diameter of 15 nM. Alpha-beta heterodimers associate head-to-tail to form protofilaments running lengthwise along the microtubule wall with the beta-tubulin subunit facing the microtubule plus end conferring a structural polarity. Microtubules usually have 13 protofilaments but different protofilament numbers can be found in some organisms and specialized cells. Interacts with gamma-tubulin; the interaction allows microtubules to nucleate from the gamma-tubulin ring complex (gTuRC). Interacts with UNC5C (via cytoplasmic domain); this interaction is decreased by NTN1/Netrin-1. Interacts with NLRP5/MATER at cytoskeleton microtubules. Interacts with DPYSL5. Interacts with CFAP61. Requires Mg(2+) as cofactor. In terms of processing, some glutamate residues at the C-terminus are polyglycylated, resulting in polyglycine chains on the gamma-carboxyl group. Glycylation is mainly limited to tubulin incorporated into axonemes (cilia and flagella) whereas glutamylation is prevalent in neuronal cells, centrioles, axonemes, and the mitotic spindle. Both modifications can coexist on the same protein on adjacent residues, and lowering polyglycylation levels increases polyglutamylation, and reciprocally. Cilia and flagella glycylation is required for their stability and maintenance. Flagella glycylation controls sperm motility. Post-translationally, some glutamate residues at the C-terminus are polyglutamylated, resulting in polyglutamate chains on the gamma-carboxyl group. Polyglutamylation plays a key role in microtubule severing by spastin (SPAST). SPAST preferentially recognizes and acts on microtubules decorated with short polyglutamate tails: severing activity by SPAST increases as the number of glutamates per tubulin rises from one to eight, but decreases beyond this glutamylation threshold. Glutamylation is also involved in cilia motility. Phosphorylated on Ser-172 by CDK1 during the cell cycle, from metaphase to telophase, but not in interphase. This phosphorylation inhibits tubulin incorporation into microtubules.

The protein resides in the cytoplasm. It is found in the cytoskeleton. Its subcellular location is the cell projection. It localises to the growth cone. The protein localises to the lamellipodium. The protein resides in the filopodium. Its function is as follows. Tubulin is the major constituent of microtubules, protein filaments consisting of alpha- and beta-tubulin heterodimers. Microtubules grow by the addition of GTP-tubulin dimers to the microtubule end, where a stabilizing cap forms. Below the cap, alpha-beta tubulin heterodimers are in GDP-bound state, owing to GTPase activity of alpha-tubulin. TUBB3 plays a critical role in proper axon guidance and maintenance. Binding of NTN1/Netrin-1 to its receptor UNC5C might cause dissociation of UNC5C from polymerized TUBB3 in microtubules and thereby lead to increased microtubule dynamics and axon repulsion. Plays a role in dorsal root ganglion axon projection towards the spinal cord. This is Tubulin beta-3 chain (Tubb3) from Rattus norvegicus (Rat).